The sequence spans 93 residues: Small ribosomal subunit protein uS19 (93 aa).

Belongs to the universal ribosomal protein uS19 family.

In terms of biological role, protein S19 forms a complex with S13 that binds strongly to the 16S ribosomal RNA. The sequence is that of Small ribosomal subunit protein uS19 from Geobacter metallireducens (strain ATCC 53774 / DSM 7210 / GS-15).